Here is a 483-residue protein sequence, read N- to C-terminus: Membrane-bound lytic murein transglycosylase F (483 aa).

The signal sequence occupies residues methionine 1–alanine 18. Residues tryptophan 19 to leucine 267 are non-LT domain. Residues histidine 269–glutamate 483 form an LT domain region. Glutamate 312 is an active-site residue. Residues glutamine 459–glutamate 483 are disordered. Positions isoleucine 473 to glutamate 483 are enriched in basic and acidic residues.

It in the N-terminal section; belongs to the bacterial solute-binding protein 3 family. In the C-terminal section; belongs to the transglycosylase Slt family.

Its subcellular location is the cell outer membrane. The catalysed reaction is Exolytic cleavage of the (1-&gt;4)-beta-glycosidic linkage between N-acetylmuramic acid (MurNAc) and N-acetylglucosamine (GlcNAc) residues in peptidoglycan, from either the reducing or the non-reducing ends of the peptidoglycan chains, with concomitant formation of a 1,6-anhydrobond in the MurNAc residue.. Murein-degrading enzyme that degrades murein glycan strands and insoluble, high-molecular weight murein sacculi, with the concomitant formation of a 1,6-anhydromuramoyl product. Lytic transglycosylases (LTs) play an integral role in the metabolism of the peptidoglycan (PG) sacculus. Their lytic action creates space within the PG sacculus to allow for its expansion as well as for the insertion of various structures such as secretion systems and flagella. The polypeptide is Membrane-bound lytic murein transglycosylase F (Actinobacillus pleuropneumoniae serotype 7 (strain AP76)).